A 190-amino-acid polypeptide reads, in one-letter code: PAVQGNDKKYTMSSVLKVSAADWKTNRFYQCQAGYNLNDMVESRFETPKIQEPNITALVPSVDFISSQNAVLGCVISGFAPDNIRVSWKKDQVDQTGVVLSSKRRTDNTFETISYLIIPTVNWKIGDKYTCEVSHPPSNFRSMISMKYQEGEKSSCPSGSPPGTCPPCSLTPELLYHTNLSVTLRNGEKH.

Positions 53 to 145 constitute an Ig-like C1-type domain; that stretch reads PNITALVPSV…PPSNFRSMIS (93 aa). N-linked (GlcNAc...) asparagine glycosylation is present at asparagine 54. Cysteine 74 and cysteine 131 form a disulfide bridge. Residue asparagine 179 is glycosylated (N-linked (GlcNAc...) asparagine).

Expressed in pancreas, spleen, epigonal organ and at low levels in several other tissues.

The protein resides in the secreted. The polypeptide is Pancreatic IgW, short secretory form (Ginglymostoma cirratum (Nurse shark)).